The primary structure comprises 384 residues: Ferrochelatase, mitochondrial (384 aa).

A [2Fe-2S] cluster-binding site is contributed by cysteine 156. Catalysis depends on residues histidine 190 and asparagine 343. [2Fe-2S] cluster is bound by residues cysteine 363, cysteine 366, and cysteine 371.

This sequence belongs to the ferrochelatase family. As to quaternary structure, homodimer. Homotetramer. Requires [2Fe-2S] cluster as cofactor.

The protein localises to the mitochondrion inner membrane. It carries out the reaction heme b + 2 H(+) = protoporphyrin IX + Fe(2+). It participates in porphyrin-containing compound metabolism; protoheme biosynthesis; protoheme from protoporphyrin-IX: step 1/1. Catalyzes the ferrous insertion into protoporphyrin IX. Terminal enzyme in heme biosynthesis. Contains four conserved cysteines that function as cluster ligands and play a crucial role in maintaining protein structure. The sequence is that of Ferrochelatase, mitochondrial from Drosophila melanogaster (Fruit fly).